The primary structure comprises 386 residues: GTPase Obg (386 aa).

The 159-residue stretch at 1–159 (MKFVDEAVIR…RSLKLELMLL (159 aa)) folds into the Obg domain. The OBG-type G domain maps to 160-333 (ADVGLLGMPN…LSLKLVDFID (174 aa)). Residues 166–173 (GMPNAGKS), 191–195 (FTTLV), 213–216 (DIPG), 283–286 (NKKD), and 314–316 (SAY) each bind GTP. Residues Ser-173 and Thr-193 each coordinate Mg(2+). The segment at 356-375 (KDSDSLNEDFDDSDDDDFDD) is disordered. Acidic residues predominate over residues 360–375 (SLNEDFDDSDDDDFDD).

This sequence belongs to the TRAFAC class OBG-HflX-like GTPase superfamily. OBG GTPase family. In terms of assembly, monomer. The cofactor is Mg(2+).

It is found in the cytoplasm. An essential GTPase which binds GTP, GDP and possibly (p)ppGpp with moderate affinity, with high nucleotide exchange rates and a fairly low GTP hydrolysis rate. Plays a role in control of the cell cycle, stress response, ribosome biogenesis and in those bacteria that undergo differentiation, in morphogenesis control. This is GTPase Obg from Shewanella sediminis (strain HAW-EB3).